The primary structure comprises 226 residues: ATP-dependent dethiobiotin synthetase BioD (226 aa).

12 to 17 contributes to the ATP binding site; the sequence is GVGKTV. Position 16 (threonine 16) interacts with Mg(2+). Lysine 37 is a catalytic residue. A substrate-binding site is contributed by threonine 41. ATP-binding positions include aspartate 49, 108–111, 169–170, and 197–199; these read EGAG, GS, and PAG. Residues aspartate 49 and glutamate 108 each coordinate Mg(2+).

This sequence belongs to the dethiobiotin synthetase family. Homodimer. It depends on Mg(2+) as a cofactor.

The protein resides in the cytoplasm. It catalyses the reaction (7R,8S)-7,8-diammoniononanoate + CO2 + ATP = (4R,5S)-dethiobiotin + ADP + phosphate + 3 H(+). Its pathway is cofactor biosynthesis; biotin biosynthesis; biotin from 7,8-diaminononanoate: step 1/2. In terms of biological role, catalyzes a mechanistically unusual reaction, the ATP-dependent insertion of CO2 between the N7 and N8 nitrogen atoms of 7,8-diaminopelargonic acid (DAPA, also called 7,8-diammoniononanoate) to form a ureido ring. The polypeptide is ATP-dependent dethiobiotin synthetase BioD (Mycobacterium tuberculosis (strain ATCC 25177 / H37Ra)).